The sequence spans 315 residues: Methionyl-tRNA formyltransferase (315 aa).

112 to 115 (SLLP) lines the (6S)-5,6,7,8-tetrahydrofolate pocket.

It belongs to the Fmt family.

It catalyses the reaction L-methionyl-tRNA(fMet) + (6R)-10-formyltetrahydrofolate = N-formyl-L-methionyl-tRNA(fMet) + (6S)-5,6,7,8-tetrahydrofolate + H(+). In terms of biological role, attaches a formyl group to the free amino group of methionyl-tRNA(fMet). The formyl group appears to play a dual role in the initiator identity of N-formylmethionyl-tRNA by promoting its recognition by IF2 and preventing the misappropriation of this tRNA by the elongation apparatus. The sequence is that of Methionyl-tRNA formyltransferase from Leptospira borgpetersenii serovar Hardjo-bovis (strain JB197).